We begin with the raw amino-acid sequence, 302 residues long: Ectoine dioxygenase (302 aa).

L-ectoine is bound at residue Gln128. Residue Lys134 participates in 2-oxoglutarate binding. 3 residues coordinate Fe cation: His145, Asp147, and His246.

This sequence belongs to the PhyH family. EctD subfamily. In terms of assembly, homodimer. Fe(2+) is required as a cofactor.

It catalyses the reaction L-ectoine + 2-oxoglutarate + O2 = 5-hydroxyectoine + succinate + CO2. Involved in the biosynthesis of 5-hydroxyectoine, called compatible solute, which helps organisms to survive extreme osmotic stress by acting as a highly soluble organic osmolyte. Catalyzes the 2-oxoglutarate-dependent selective hydroxylation of L-ectoine to yield (4S,5S)-5-hydroxyectoine. The chain is Ectoine dioxygenase from Stutzerimonas stutzeri (strain A1501) (Pseudomonas stutzeri).